We begin with the raw amino-acid sequence, 1083 residues long: Chitin synthase 2 (1083 aa).

2 stretches are compositionally biased toward basic and acidic residues: residues 1–10 (MSSEREERTF) and 18–30 (DDVR…ENQE). 2 disordered regions span residues 1-248 (MSSE…IADD) and 260-294 (DDDV…TLNE). A glycan (N-linked (GlcNAc...) asparagine) is linked at Asn23. 2 stretches are compositionally biased toward polar residues: residues 38–49 (SYASSMAESQTL) and 61–70 (AKLQNKNRTS). The N-linked (GlcNAc...) asparagine glycan is linked to Asn67. 2 stretches are compositionally biased toward basic and acidic residues: residues 78–100 (LPRD…KEQQ) and 117–128 (RLRDVNSHDKLP). 3 stretches are compositionally biased toward polar residues: residues 132-148 (SPRN…SRSG), 177-191 (RPWT…FTRS), and 282-292 (SYMSSESQDTL). N-linked (GlcNAc...) asparagine glycosylation is present at Asn417. Transmembrane regions (helical) follow at residues 708–728 (WLNG…QIWF), 747–767 (FIQL…FYFV), 785–805 (TVIF…QFIL), 820–840 (ISMI…FYII), 860–880 (NMIV…ILYL), 889–909 (SAQY…YAFC), 987–1007 (YLVL…SEIY), and 1020–1040 (FLLW…TTFA).

Belongs to the chitin synthase family. Class II subfamily.

It localises to the cell membrane. The enzyme catalyses [(1-&gt;4)-N-acetyl-beta-D-glucosaminyl](n) + UDP-N-acetyl-alpha-D-glucosamine = [(1-&gt;4)-N-acetyl-beta-D-glucosaminyl](n+1) + UDP + H(+). In terms of biological role, polymerizes chitin, a structural polymer of the cell wall and septum, by transferring the sugar moiety of UDP-GlcNAc to the non-reducing end of the growing chitin polymer. Plays a critical role in cell wall integrity and virulence. In Fusarium oxysporum f. sp. lycopersici (strain 4287 / CBS 123668 / FGSC 9935 / NRRL 34936) (Fusarium vascular wilt of tomato), this protein is Chitin synthase 2.